We begin with the raw amino-acid sequence, 575 residues long: Glycine--tRNA ligase (575 aa).

The substrate site is built by Arg96 and Glu162. Residues 194-196 (RNE), 204-209 (IRLREF), 327-328 (EC), and 450-453 (GIDR) contribute to the ATP site. 209–213 (FTQAE) is a substrate binding site. Residue 446–450 (EPSYG) participates in substrate binding.

Belongs to the class-II aminoacyl-tRNA synthetase family.

It localises to the cytoplasm. It carries out the reaction tRNA(Gly) + glycine + ATP = glycyl-tRNA(Gly) + AMP + diphosphate. Functionally, catalyzes the attachment of glycine to tRNA(Gly). This is Glycine--tRNA ligase from Methanococcus maripaludis (strain C5 / ATCC BAA-1333).